The sequence spans 299 residues: Nucleotide-binding protein SAV_6292 (299 aa).

23–30 (GMSGAGRS) is a binding site for ATP. 74–77 (DVRG) is a binding site for GTP.

Belongs to the RapZ-like family.

In terms of biological role, displays ATPase and GTPase activities. This chain is Nucleotide-binding protein SAV_6292, found in Streptomyces avermitilis (strain ATCC 31267 / DSM 46492 / JCM 5070 / NBRC 14893 / NCIMB 12804 / NRRL 8165 / MA-4680).